Reading from the N-terminus, the 227-residue chain is MNSSGDNAGFEWWRRTMQYKTGIGLTPEEKTRYEDDSKARELKKECLKCYEYRDWMLKYSPTVRFMVQAITKLNKGSDSKFDDSKIICDYCPDWKGGGFHPELGILLCQNRLRDKWHLEDTLSHELIHYFDDLKWQIDWLNLKHHACSEIRASSLSGECRFWEEFKRRGFRTGFHVARGHQDCVRRRAIISVSGNPNCQSKEHAAKIVDEVWDSCFADTRPFDEIYR.

His-124 is a binding site for a divalent metal cation. Residue Glu-125 is part of the active site. His-128 serves as a coordination point for a divalent metal cation.

Belongs to the peptidase M76 family. Interacts with ATP6.

It is found in the mitochondrion inner membrane. In terms of biological role, has a dual role in the assembly of mitochondrial ATPase. Acts as a protease that removes the N-terminal 10 residues of mitochondrial ATPase CF(0) subunit 6 (ATP6) at the intermembrane space side. Also involved in the correct assembly of the membrane-embedded ATPase CF(0) particle, probably mediating association of ATP6 with the subunit 9 ring. The chain is Mitochondrial inner membrane protease ATP23 (ATP23) from Saccharomyces cerevisiae (strain YJM789) (Baker's yeast).